Here is a 210-residue protein sequence, read N- to C-terminus: MKIPPVSIRYLRSILELKDAPPDQGCEVAFAGRSNAGKSSAINTLANVGGLARVSKTPGRTRMINFFSIDDGRRLVDLPGYGYAKVPGEIHRRWEAALEQYLRYRQSLRGVFLLMDVRHPFTEMDEVMIEWCAHRSIALHVALTKSDKLSRGAAMNARLMAKTRLAGYGSPDFSVQLFSSLKKSGTEEAWEVLGRWLDLPREDQEKTPGA.

One can recognise an EngB-type G domain in the interval 24 to 199; the sequence is QGCEVAFAGR…WEVLGRWLDL (176 aa). GTP-binding positions include 32–39, 59–63, 77–80, 144–147, and 178–180; these read GRSNAGKS, GRTRM, DLPG, TKSD, and FSS. 2 residues coordinate Mg(2+): S39 and T61.

Belongs to the TRAFAC class TrmE-Era-EngA-EngB-Septin-like GTPase superfamily. EngB GTPase family. Requires Mg(2+) as cofactor.

Functionally, necessary for normal cell division and for the maintenance of normal septation. The polypeptide is Probable GTP-binding protein EngB (Methylococcus capsulatus (strain ATCC 33009 / NCIMB 11132 / Bath)).